We begin with the raw amino-acid sequence, 300 residues long: MDIPHIPVLYNEVLETFKDINEGYIIDCTTGFAGHSSGLLNQNQNIKLICNDQDDEALAFSKKRLEKFENGVIFNKGNFEHVIETFKDYEIRGVLADIGVSSLQLDKLERGFGFESLTLDMRMNQNQSLDAATVVNTYSQTELERIFKDYGEVREYKKVASLIVNNRPFNSSKELADFLSKKMSKGKLHPATLPFQAIRIEVNDELGVLERLFDSLEKAKLKDCIVAIISFHSLEDRIVKNYFKKWSKSCICPDNVFRCECGNNHALGKIITKKPIIPTALEIKQNPRSRSSKLRVFKFD.

S-adenosyl-L-methionine contacts are provided by residues 33 to 35, Asp52, Phe86, Asp97, and Gln104; that span reads AGH.

It belongs to the methyltransferase superfamily. RsmH family.

The protein resides in the cytoplasm. It catalyses the reaction cytidine(1402) in 16S rRNA + S-adenosyl-L-methionine = N(4)-methylcytidine(1402) in 16S rRNA + S-adenosyl-L-homocysteine + H(+). Specifically methylates the N4 position of cytidine in position 1402 (C1402) of 16S rRNA. The chain is Ribosomal RNA small subunit methyltransferase H from Aliarcobacter butzleri (strain RM4018) (Arcobacter butzleri).